The primary structure comprises 278 residues: Dermonecrotic toxin Ls4SicTox-alphaIII1ii (278 aa).

H5 is a catalytic residue. Residues E25 and D27 each contribute to the Mg(2+) site. H40 (nucleophile) is an active-site residue. C44 and C50 are joined by a disulfide. Mg(2+) is bound at residue D84.

The protein belongs to the arthropod phospholipase D family. Class I subfamily. It depends on Mg(2+) as a cofactor. Expressed by the venom gland.

Its subcellular location is the secreted. It carries out the reaction an N-(acyl)-sphingosylphosphocholine = an N-(acyl)-sphingosyl-1,3-cyclic phosphate + choline. The enzyme catalyses an N-(acyl)-sphingosylphosphoethanolamine = an N-(acyl)-sphingosyl-1,3-cyclic phosphate + ethanolamine. The catalysed reaction is a 1-acyl-sn-glycero-3-phosphocholine = a 1-acyl-sn-glycero-2,3-cyclic phosphate + choline. It catalyses the reaction a 1-acyl-sn-glycero-3-phosphoethanolamine = a 1-acyl-sn-glycero-2,3-cyclic phosphate + ethanolamine. Its function is as follows. Dermonecrotic toxins cleave the phosphodiester linkage between the phosphate and headgroup of certain phospholipids (sphingolipid and lysolipid substrates), forming an alcohol (often choline) and a cyclic phosphate. This toxin acts on sphingomyelin (SM). It may also act on ceramide phosphoethanolamine (CPE), lysophosphatidylcholine (LPC) and lysophosphatidylethanolamine (LPE), but not on lysophosphatidylserine (LPS), and lysophosphatidylglycerol (LPG). It acts by transphosphatidylation, releasing exclusively cyclic phosphate products as second products. Induces dermonecrosis, hemolysis, increased vascular permeability, edema, inflammatory response, and platelet aggregation. This Loxosceles sp. (strain 4 GJB-2008) (Recluse spider) protein is Dermonecrotic toxin Ls4SicTox-alphaIII1ii.